A 214-amino-acid chain; its full sequence is uncharacterized protein (214 aa).

The next 7 membrane-spanning stretches (helical) occupy residues 4-23 (VSIVEIFLIISLPLLFFSSF), 35-57 (SFVHGAVLAVPLLLLRSFFLGYY), 67-89 (QWMRFFLFDYVFPLFCLPFFLFT), 96-118 (VSLVSGVSALFGAYTSFFFVHVY), 128-150 (ARVMTLVLYMTNLLQLHAHVSFS), 155-177 (LPLLGLIAALCIFLLMGAFSATV), and 187-209 (TVVYTSMLAGAGGVALLTHFFAV).

It is found in the cell membrane. This is an uncharacterized protein from Treponema pallidum (strain Nichols).